We begin with the raw amino-acid sequence, 1179 residues long: Protein FAM83H (1179 aa).

Residues 1–286 (MARRSQSSSQ…LFAQSEPLVP (286 aa)) are DUF1669. The interval 1-286 (MARRSQSSSQ…LFAQSEPLVP (286 aa)) is mediates interaction with CSNK1A1 and is required for FAM83H activity in keratin cytoskeleton organization. Position 465 is a phosphothreonine (Thr-465). 2 disordered regions span residues 484 to 577 (ADPD…GRAG) and 636 to 669 (FPTKVPVPGPGSGGNGPEREGPEEPGLAKQDSFR). A phosphoserine mark is found at Ser-513, Ser-514, Ser-516, Ser-523, Ser-647, and Ser-667. Thr-756 bears the Phosphothreonine mark. Phosphoserine occurs at positions 759, 785, and 813. Positions 830-1026 (RLPSRFLSAQ…RGPRARLSSA (197 aa)) are disordered. Polar residues predominate over residues 836 to 847 (LSAQSHSTSPQG). Residues Ser-870 and Ser-881 each carry the phosphoserine modification. Thr-883 carries the post-translational modification Phosphothreonine. Positions 884 to 906 (PGFSTRRGSPTTGFIEQKGSPTS) are enriched in polar residues. Residue Ser-892 is modified to Phosphoserine. Phosphothreonine is present on Thr-894. Phosphoserine is present on residues Ser-903, Ser-914, Ser-925, Ser-936, Ser-945, Ser-1003, Ser-1009, Ser-1024, and Ser-1025. At Thr-1040 the chain carries Phosphothreonine. Disordered regions lie at residues 1047–1084 (ISAHGQKHRAVPAPSPGPTHNSPELGRPPAAGVLAPDM) and 1143–1165 (EEASSPGAGEGPAEEGTRDSKVG). Phosphoserine occurs at positions 1048, 1068, and 1147.

The protein belongs to the FAM83 family. Directly interacts (via DUF1669) with casein kinase isoforms CSNK1A1, CSNK1A1L, CSNK1D and CSNK1E. Interaction with CSNK1A1 recruits CSNK1A1 to keratin filaments. Interacts with KRT18 and probably other keratins. In terms of tissue distribution, expressed in the tooth follicle.

The protein resides in the cytoplasm. The protein localises to the cytoskeleton. Functionally, may play a major role in the structural organization and calcification of developing enamel. May play a role in keratin cytoskeleton disassembly by recruiting CSNK1A1 to keratin filaments. Thereby, it may regulate epithelial cell migration. The polypeptide is Protein FAM83H (Homo sapiens (Human)).